The sequence spans 464 residues: Glutathione reductase (464 aa).

Residues Ser-17 and Gly-18 each contribute to the FAD site. Ser-17 provides a ligand contact to glutathione. Residue Arg-24 participates in glutathione binding. FAD is bound by residues Glu-37, Thr-45, Cys-46, and Lys-54. Cysteines 46 and 51 form a disulfide. Tyr-103 is a glutathione binding site. Ala-119 serves as a coordination point for FAD. Residues Ala-186, Ile-189, Glu-192, Arg-209, Arg-215, and Gly-274 each contribute to the NADP(+) site. Asp-315 serves as a coordination point for FAD. Glu-321 is an NADP(+) binding site. Thr-323 contributes to the FAD binding site. Glutathione is bound at residue Arg-331. Val-354 serves as a coordination point for NADP(+). His-453 is a binding site for FAD. Catalysis depends on His-453, which acts as the Proton acceptor.

The protein belongs to the class-I pyridine nucleotide-disulfide oxidoreductase family. In terms of assembly, homodimer. FAD serves as cofactor.

The protein resides in the cytoplasm. Its subcellular location is the mitochondrion. The enzyme catalyses 2 glutathione + NADP(+) = glutathione disulfide + NADPH + H(+). Functionally, catalyzes the reduction of glutathione disulfide (GSSG) to reduced glutathione (GSH). Constitutes the major mechanism to maintain a high GSH:GSSG ratio in the cytosol. This is Glutathione reductase (pgr1) from Schizosaccharomyces pombe (strain 972 / ATCC 24843) (Fission yeast).